Here is a 201-residue protein sequence, read N- to C-terminus: Peptide deformylase (201 aa).

Cysteine 121 and histidine 163 together coordinate Fe cation. Glutamate 164 is a catalytic residue. Position 167 (histidine 167) interacts with Fe cation.

It belongs to the polypeptide deformylase family. Fe(2+) serves as cofactor.

The enzyme catalyses N-terminal N-formyl-L-methionyl-[peptide] + H2O = N-terminal L-methionyl-[peptide] + formate. Functionally, removes the formyl group from the N-terminal Met of newly synthesized proteins. Requires at least a dipeptide for an efficient rate of reaction. N-terminal L-methionine is a prerequisite for activity but the enzyme has broad specificity at other positions. This Synechococcus sp. (strain CC9902) protein is Peptide deformylase.